Here is a 545-residue protein sequence, read N- to C-terminus: Reticulon-2 (545 aa).

Disordered regions lie at residues 1 to 183 (MGQV…ETGE) and 199 to 250 (SPEV…EREP). A compositionally biased stretch (low complexity) spans 14-25 (APSTASSTPDST). A compositionally biased stretch (basic and acidic residues) spans 32-43 (SDFRELHTAREF). A Phosphoserine modification is found at serine 44. Over residues 135–146 (RPLEDLRLRLDH) the composition is skewed to basic and acidic residues. A compositionally biased stretch (low complexity) spans 157 to 166 (GEDSSTSSST). Polar residues predominate over residues 199-230 (SPEVLTPQLSPGSGTPQAGTPSPSRSRDSNSG). Serine 227 and serine 229 each carry phosphoserine. In terms of domain architecture, Reticulon spans 345 to 545 (VADLLYWKDT…AVSGSKAKAE (201 aa)). The next 2 helical transmembrane spans lie at 368-388 (LLCL…LLLL) and 463-483 (LLFY…LLIL).

Interacts with isoform 1 but not isoform 3 of SPAST. Interacts with BACE1. Interacts (via first transmembrane domain) with ARL6IP5/GTRAP3-18. Interacts (via N-terminus) with SLC1A1/EAAC1; the interaction promotes cell surface expression of SLC1A1. In terms of assembly, interacts with TMEM33. As to expression, highly expressed in skeletal muscle.

It localises to the endoplasmic reticulum membrane. The protein resides in the sarcoplasmic reticulum membrane. It is found in the cell membrane. The protein localises to the sarcolemma. Its subcellular location is the T-tubule. It localises to the cytoplasm. The protein resides in the myofibril. It is found in the sarcomere. The protein localises to the z line. Its subcellular location is the cytoskeleton. Functionally, inhibits amyloid precursor protein processing, probably by blocking BACE1 activity. Enhances trafficking of the glutamate transporter SLC1A1/EAAC1 from the endoplasmic reticulum to the cell surface. Plays a role in the translocation of SLC2A4/GLUT4 from intracellular membranes to the cell membrane which facilitates the uptake of glucose into the cell. This chain is Reticulon-2 (RTN2), found in Homo sapiens (Human).